The primary structure comprises 993 residues: uncharacterized protein (993 aa).

The N-terminal stretch at Met-1–Ser-24 is a signal peptide. Asn-7, Asn-44, Asn-89, Asn-121, Asn-138, Asn-161, Asn-169, Asn-232, Asn-361, Asn-386, Asn-393, Asn-423, Asn-447, Asn-480, and Asn-488 each carry an N-linked (GlcNAc...) asparagine glycan. Residue Glu-504 is part of the active site. N-linked (GlcNAc...) asparagine glycosylation is found at Asn-545, Asn-548, and Asn-614. Catalysis depends on Asp-672, which acts as the Proton donor. Asn-673, Asn-814, Asn-826, Asn-835, Asn-846, Asn-910, Asn-940, and Asn-987 each carry an N-linked (GlcNAc...) asparagine glycan.

The protein belongs to the glycosyl hydrolase 31 family.

This is an uncharacterized protein from Schizosaccharomyces pombe (strain 972 / ATCC 24843) (Fission yeast).